Consider the following 110-residue polypeptide: UPF0060 membrane protein Bpet0062 (110 aa).

Helical transmembrane passes span 7-27 (LGLFALTAVAEIVGCYLPYLW), 33-53 (SAWLLVPAALSLAVFAWLLTL), 63-83 (AAYGGVYVSMALLWLWAVDGV), and 86-106 (ATTDWAGVGLCLAGMALIMAG).

This sequence belongs to the UPF0060 family.

It localises to the cell inner membrane. In Bordetella petrii (strain ATCC BAA-461 / DSM 12804 / CCUG 43448), this protein is UPF0060 membrane protein Bpet0062.